The primary structure comprises 178 residues: Acireductone dioxygenase (178 aa).

Fe(2+)-binding residues include histidine 81, histidine 83, glutamate 87, and histidine 126. Ni(2+) contacts are provided by histidine 81, histidine 83, glutamate 87, and histidine 126.

This sequence belongs to the acireductone dioxygenase (ARD) family. The cofactor is Fe(2+). Ni(2+) is required as a cofactor.

It is found in the cytoplasm. Its subcellular location is the nucleus. The catalysed reaction is 1,2-dihydroxy-5-(methylsulfanyl)pent-1-en-3-one + O2 = 4-methylsulfanyl-2-oxobutanoate + formate + 2 H(+). It carries out the reaction 1,2-dihydroxy-5-(methylsulfanyl)pent-1-en-3-one + O2 = 3-(methylsulfanyl)propanoate + CO + formate + 2 H(+). It functions in the pathway amino-acid biosynthesis; L-methionine biosynthesis via salvage pathway; L-methionine from S-methyl-5-thio-alpha-D-ribose 1-phosphate: step 5/6. Functionally, catalyzes 2 different reactions between oxygen and the acireductone 1,2-dihydroxy-3-keto-5-methylthiopentene (DHK-MTPene) depending upon the metal bound in the active site. Fe-containing acireductone dioxygenase (Fe-ARD) produces formate and 2-keto-4-methylthiobutyrate (KMTB), the alpha-ketoacid precursor of methionine in the methionine recycle pathway. Ni-containing acireductone dioxygenase (Ni-ARD) produces methylthiopropionate, carbon monoxide and formate, and does not lie on the methionine recycle pathway. This chain is Acireductone dioxygenase (adi1), found in Neurospora crassa (strain ATCC 24698 / 74-OR23-1A / CBS 708.71 / DSM 1257 / FGSC 987).